The primary structure comprises 236 residues: 5'-methylthioadenosine/S-adenosylhomocysteine nucleosidase (236 aa).

Residue E12 is the Proton acceptor of the active site. Substrate contacts are provided by residues G78, I153, and 174 to 175 (ME). The active-site Proton donor is D198.

Belongs to the PNP/UDP phosphorylase family. MtnN subfamily.

It catalyses the reaction S-adenosyl-L-homocysteine + H2O = S-(5-deoxy-D-ribos-5-yl)-L-homocysteine + adenine. It carries out the reaction S-methyl-5'-thioadenosine + H2O = 5-(methylsulfanyl)-D-ribose + adenine. The enzyme catalyses 5'-deoxyadenosine + H2O = 5-deoxy-D-ribose + adenine. Its pathway is amino-acid biosynthesis; L-methionine biosynthesis via salvage pathway; S-methyl-5-thio-alpha-D-ribose 1-phosphate from S-methyl-5'-thioadenosine (hydrolase route): step 1/2. Catalyzes the irreversible cleavage of the glycosidic bond in both 5'-methylthioadenosine (MTA) and S-adenosylhomocysteine (SAH/AdoHcy) to adenine and the corresponding thioribose, 5'-methylthioribose and S-ribosylhomocysteine, respectively. Also cleaves 5'-deoxyadenosine, a toxic by-product of radical S-adenosylmethionine (SAM) enzymes, into 5-deoxyribose and adenine. This is 5'-methylthioadenosine/S-adenosylhomocysteine nucleosidase from Shewanella sp. (strain MR-7).